The sequence spans 66 residues: UPF0434 protein M446_0487 (66 aa).

This sequence belongs to the UPF0434 family.

The chain is UPF0434 protein M446_0487 from Methylobacterium sp. (strain 4-46).